An 82-amino-acid chain; its full sequence is Delta-actitoxin-Aeq2b 3 (82 aa).

Residues 1-19 form the signal peptide; that stretch reads MNRLMILVFAAVILALASA. Residues 20-26 constitute a propeptide that is removed on maturation; the sequence is DEDVDIT. Intrachain disulfides connect Cys32-Cys79, Cys34-Cys69, and Cys62-Cys80.

The protein belongs to the sea anemone sodium channel inhibitory toxin family. Type I subfamily.

It is found in the secreted. It localises to the nematocyst. In terms of biological role, binds specifically to voltage-gated sodium channels (Nav), thereby delaying their inactivation during signal transduction. Causes death to crabs. In Actinia equina (Beadlet anemone), this protein is Delta-actitoxin-Aeq2b 3.